The primary structure comprises 75 residues: Small ribosomal subunit protein bS16c (75 aa).

The protein belongs to the bacterial ribosomal protein bS16 family.

It is found in the plastid. The protein resides in the chloroplast. The sequence is that of Small ribosomal subunit protein bS16c from Cyanidioschyzon merolae (strain NIES-3377 / 10D) (Unicellular red alga).